The sequence spans 715 residues: Serrate RNA effector molecule homolog (715 aa).

Disordered stretches follow at residues 1–87 (MDSD…YSGP), 223–259 (ENKD…TDKA), and 629–715 (EPKH…DDIP). Basic and acidic residues-rich tracts occupy residues 7–25 (GDRR…DSYR), 37–57 (YDNK…SRGD), and 223–242 (ENKD…VKEE). Residues 243 to 256 (PNEEQEEGAIDDET) show a composition bias toward acidic residues. Positions 629 to 659 (EPKHMPHMSRDDHRGGGGDRGYGRERDDDRG) are enriched in basic and acidic residues.

This sequence belongs to the ARS2 family.

It is found in the nucleus. Its function is as follows. Acts as a mediator between the cap-binding complex (CBC) and the primary microRNAs (miRNAs) processing machinery. Contributes to the stability and delivery of capped primary miRNA transcripts to the primary miRNA processing complex, thereby playing a role in RNA-mediated gene silencing (RNAi) by miRNAs. The protein is Serrate RNA effector molecule homolog of Caenorhabditis briggsae.